Reading from the N-terminus, the 220-residue chain is MASRWMEWTCCGLWLFGKPTQKKYTQLFEEPSYKCSERVKQEINKGLPPGVSVGDLILGDKSTEALNQAHLLALQSNNITEYLARFNAAEIPASCQGIVSNQIDKLKAMQSVIWNAMISIATSNVELSDSGFQLLLDKQACENMTLMEMEKLATAISVDNTTNWAREISNIIITQPTHALPEAVPEKPEPIYDDPEELESTMLLQPTQQKKTTVTQQQIL.

Residue C11 is the site of S-palmitoyl cysteine; by host attachment.

This sequence belongs to the herpesviridae UL51 family. Oligomerizes. Interacts with UL7 homolog; this interaction mediates UL7 homolog incorporation to virions. In terms of processing, phosphorylated. Post-translationally, palmitoylation is necessary for Golgi localization.

It is found in the virion tegument. The protein resides in the host cytoplasm. Its subcellular location is the host Golgi apparatus. In terms of biological role, plays several roles during the time course of infection, including egress of virus particles from the perinuclear space and secondary envelopment of cytoplasmic capsids that bud into specific trans-Golgi network (TGN)-derived membranes. This chain is Tegument protein UL51 homolog (55), found in Connochaetes taurinus (Blue wildebeest).